Consider the following 415-residue polypeptide: Lipid-A-disaccharide synthase (415 aa).

The disordered stretch occupies residues 1-21 (MNSLPESGSDGQSSADPSQKA).

It belongs to the LpxB family.

It catalyses the reaction a lipid X + a UDP-2-N,3-O-bis[(3R)-3-hydroxyacyl]-alpha-D-glucosamine = a lipid A disaccharide + UDP + H(+). It functions in the pathway bacterial outer membrane biogenesis; LPS lipid A biosynthesis. Functionally, condensation of UDP-2,3-diacylglucosamine and 2,3-diacylglucosamine-1-phosphate to form lipid A disaccharide, a precursor of lipid A, a phosphorylated glycolipid that anchors the lipopolysaccharide to the outer membrane of the cell. The protein is Lipid-A-disaccharide synthase of Gluconobacter oxydans (strain 621H) (Gluconobacter suboxydans).